We begin with the raw amino-acid sequence, 1024 residues long: Protein translocase subunit SecA (1024 aa).

ATP is bound by residues glutamine 143, 161-165 (GEGKT), and aspartate 661. The disordered stretch occupies residues 970-1024 (HEEAGSVYNAQPDGEPESQASKQQPVVADHSKPGRNDLCPCGSGKKYKNCHGREA). Cysteine 1008, cysteine 1010, cysteine 1019, and histidine 1020 together coordinate Zn(2+). Over residues 1014–1024 (KKYKNCHGREA) the composition is skewed to basic residues.

It belongs to the SecA family. As to quaternary structure, monomer and homodimer. Part of the essential Sec protein translocation apparatus which comprises SecA, SecYEG and auxiliary proteins SecDF. Other proteins may also be involved. Requires Zn(2+) as cofactor.

The protein localises to the cell inner membrane. Its subcellular location is the cytoplasm. It carries out the reaction ATP + H2O + cellular proteinSide 1 = ADP + phosphate + cellular proteinSide 2.. Part of the Sec protein translocase complex. Interacts with the SecYEG preprotein conducting channel. Has a central role in coupling the hydrolysis of ATP to the transfer of proteins into and across the cell membrane, serving as an ATP-driven molecular motor driving the stepwise translocation of polypeptide chains across the membrane. This is Protein translocase subunit SecA from Chlorobium luteolum (strain DSM 273 / BCRC 81028 / 2530) (Pelodictyon luteolum).